A 368-amino-acid chain; its full sequence is MITVDVDLGERAYPIHIGTGLLSQAELFAPHIRGTRAVIVTNETVAPLYAARVEAAIRSLGKTVDMVVLPDGESFKTWETLNRIFDALLASGADRKTTLVALGGGVIGDMTGFAAASYMRGVPFIQVPTTLLSQVDSSVGGKTGINHPLGKNMIGAFHQPQAVLADIDTLRTLPPRELAAGMAEVIKHGAIADADYFAWIERHIAGLNACDADLMAGAVRGSVQIKAAVVAQDERESGLRAILNFGHTFGHAIEAGLGYGEWLHGEAVGCGMAMAADLSHRLGFIDIDTRNRVTALTRAANLPVVAPDLGVARFIDLMRVDKKAEAGEIKFVLLRKLGQAFVTTVPDTDLRATLQHAVLRPPTEAPVA.

NAD(+) contacts are provided by residues Asp-71–Lys-76, Gly-105–Asp-109, Thr-129–Thr-130, Lys-142, Lys-151, and Thr-169–Thr-172. Zn(2+) is bound by residues Glu-184, His-247, and His-264.

Belongs to the sugar phosphate cyclases superfamily. Dehydroquinate synthase family. The cofactor is NAD(+). It depends on Co(2+) as a cofactor. Requires Zn(2+) as cofactor.

It localises to the cytoplasm. It carries out the reaction 7-phospho-2-dehydro-3-deoxy-D-arabino-heptonate = 3-dehydroquinate + phosphate. The protein operates within metabolic intermediate biosynthesis; chorismate biosynthesis; chorismate from D-erythrose 4-phosphate and phosphoenolpyruvate: step 2/7. In terms of biological role, catalyzes the conversion of 3-deoxy-D-arabino-heptulosonate 7-phosphate (DAHP) to dehydroquinate (DHQ). This chain is 3-dehydroquinate synthase, found in Ralstonia nicotianae (strain ATCC BAA-1114 / GMI1000) (Ralstonia solanacearum).